The following is a 500-amino-acid chain: MIRFKKTKLIASIAMALCLFSQPVISFSKDITDKNQSIDSGISSLSYNRNEVLASNGDKIESFVPKEGKKAGNKFIVVERQKRSLTTSPVDISIIDSVNDRTYPGALQLADKAFVENRPTILMVKRKPININIDLPGLKGENSIKVDDPTYGKVSGAIDELVSKWNEKYSSTHTLPARTQYSESMVYSKSQISSALNVNAKVLENSLGVDFNAVANNEKKVMILAYKQIFYTVSADLPKNPSDLFDDSVTFNDLKQKGVSNEAPPLMVSNVAYGRTIYVKLETTSSSKDVQAAFKALIKNTDIKNSQQYKDIYENSSFTAVVLGGDAQEHNKVVTKDFDEIRKVIKDNATFSTKNPAYPISYTSVFLKDNSVAAVHNKTDYIETTSTEYSKGKINLDHSGAYVAQFEVAWDEVSYDKEGNEVLTHKTWDGNYQDKTAHYSTVIPLEANARNIRIKARECTGLAWEWWRDVISEYDVPLTNNINVSIWGTTLYPGSSITYN.

An N-terminal signal peptide occupies residues 1–28; that stretch reads MIRFKKTKLIASIAMALCLFSQPVISFS. A run of 4 beta stranded transmembrane segments spans residues 189–202, 209–218, 287–296, and 304–316; these read KSQI…NAKV, VDFNAVANNE, SKDVQAAFKA, and KNSQ…YENS. A Conserved undecapeptide motif is present at residues 458–468; that stretch reads ECTGLAWEWWR. A Cholesterol binding motif is present at residues 490 to 491; the sequence is TL.

Belongs to the cholesterol-dependent cytolysin family. In terms of assembly, homooligomeric pore complex of 35 to 50 subunits; when inserted in the host membrane.

It is found in the secreted. Its subcellular location is the host cell membrane. A cholesterol-dependent toxin that causes cytolysis by forming pores in cholesterol containing host membranes. After binding to target membranes, the protein assembles into a pre-pore complex. A conformation change leads to insertion in the host membrane and formation of an oligomeric pore complex. Cholesterol is required for binding to host cell membranes, membrane insertion and pore formation; cholesterol binding is mediated by a Thr-Leu pair in the C-terminus. Can be reversibly inactivated by oxidation. This Clostridium perfringens (strain ATCC 13124 / DSM 756 / JCM 1290 / NCIMB 6125 / NCTC 8237 / Type A) protein is Perfringolysin O (pfo).